A 371-amino-acid polypeptide reads, in one-letter code: Mannose-1-phosphate guanylyltransferase catalytic subunit beta (371 aa).

The substrate-binding domain stretch occupies residues 14-233 (RALILVGGYG…TGFWMDIGQP (220 aa)). Asp122 lines the GDP-alpha-D-mannose pocket. Asp122 contacts Mg(2+). Lys173 is a catalytic residue. Asp229 lines the GDP-alpha-D-mannose pocket. Position 229 (Asp229) interacts with Mg(2+). Residues 256 to 371 (YTGPGVVGNV…ASVPEPQIIM (116 aa)) form a hexapeptide repeat domain region.

It belongs to the transferase hexapeptide repeat family. Component of the GMPPA-GMPPB mannose-1-phosphate guanylyltransferase complex composed of 4 Gmppa subunits and 8 Gmppb subunits; the complex is organized into three layers, a central layer made up of 2 Gmppa dimers sandwiched between two layers each made up of 2 Gmppb dimers. Gmppb catalytic activity is reduced when part of the complex and binding of GDP-alpha-D-Mannose by Gmppa induces allosteric feedback inhibition of Gmppb. It depends on Mg(2+) as a cofactor.

The catalysed reaction is alpha-D-mannose 1-phosphate + GTP + H(+) = GDP-alpha-D-mannose + diphosphate. It participates in nucleotide-sugar biosynthesis; GDP-alpha-D-mannose biosynthesis; GDP-alpha-D-mannose from alpha-D-mannose 1-phosphate (GTP route): step 1/1. Enzyme activity is reduced by incorporation into the GMPPA-GMPPB mannose-1-phosphate guanylyltransferase complex. Allosterically inhibited, when part of the GMPPA-GMPPB complex, by GDP-alpha-D-mannose binding to Gmppa. Catalytic subunit of the GMPPA-GMPPB mannose-1-phosphate guanylyltransferase complex. Catalyzes the formation of GDP-mannose, an essential precursor of glycan moieties of glycoproteins and glycolipids. Can catalyze the reverse reaction in vitro. Together with GMPPA regulates GDP-alpha-D-mannose levels. The chain is Mannose-1-phosphate guanylyltransferase catalytic subunit beta from Drosophila pseudoobscura pseudoobscura (Fruit fly).